Here is a 177-residue protein sequence, read N- to C-terminus: Nucleoside triphosphate/diphosphate phosphatase (177 aa).

Catalysis depends on R23, which acts as the Proton donor. Mg(2+) contacts are provided by N87, D103, D105, D107, D120, and E123.

Belongs to the Ntdp family. Requires Mg(2+) as cofactor.

The catalysed reaction is a ribonucleoside 5'-triphosphate + H2O = a ribonucleoside 5'-diphosphate + phosphate + H(+). The enzyme catalyses a ribonucleoside 5'-diphosphate + H2O = a ribonucleoside 5'-phosphate + phosphate + H(+). Functionally, has nucleoside phosphatase activity towards nucleoside triphosphates and nucleoside diphosphates. This chain is Nucleoside triphosphate/diphosphate phosphatase, found in Streptococcus sanguinis (strain SK36).